We begin with the raw amino-acid sequence, 625 residues long: Pheromone-processing carboxypeptidase kex1 (625 aa).

Positions 1 to 38 (MVSLSLRGARRTAKDAASLPFLSWTLSLLALNPLLVSA) are cleaved as a signal peptide. The Lumenal portion of the chain corresponds to 39 to 522 (KSAADYYVRS…KEAEWKAYAK (484 aa)). An N-linked (GlcNAc...) asparagine glycan is attached at asparagine 119. Catalysis depends on residues serine 190 and aspartate 389. Residues asparagine 440 and asparagine 448 are each glycosylated (N-linked (GlcNAc...) asparagine). The active site involves histidine 451. A disordered region spans residues 479–510 (SPADSRIDGEKLPQTSVGGHPNSTAAEEQEKK). The span at 491 to 502 (PQTSVGGHPNST) shows a compositional bias: polar residues. Asparagine 500 is a glycosylation site (N-linked (GlcNAc...) asparagine). The chain crosses the membrane as a helical span at residues 523 to 543 (SGEAVLVVVIIGVIVWGFFIW). The Cytoplasmic portion of the chain corresponds to 544 to 625 (RSRRHHRGYR…QGSRPEGGQS (82 aa)). The segment at 588–625 (LDDLHSPGLDREHYAVGDDSDDEQQHQRQGSRPEGGQS) is disordered. Basic and acidic residues predominate over residues 589 to 603 (DDLHSPGLDREHYAV).

Belongs to the peptidase S10 family.

The protein resides in the golgi apparatus. The protein localises to the trans-Golgi network membrane. The catalysed reaction is Preferential release of a C-terminal arginine or lysine residue.. Its function is as follows. Protease with a carboxypeptidase B-like function involved in the C-terminal processing of the lysine and arginine residues from protein precursors. Promotes cell fusion and is involved in the programmed cell death. This chain is Pheromone-processing carboxypeptidase kex1 (kex1), found in Aspergillus terreus (strain NIH 2624 / FGSC A1156).